Reading from the N-terminus, the 875-residue chain is MLNKFKPGEILLSLAKPNKKKIANIADFSNVSLNLSFADLNDLSFNIPLKARYNFLMKPNHVAKLMREWYLIKAEFLNRVEWFVITGLTKSENEEQTIQVRCQGLPYILHKNKIRSYQGVSKNLQEVATDCLKGTRLNIGYIDPSFNEKRRSFDVTSTRYEFLKTIWETFEAVPVFDTVKNTVSFYKKDTVSKYKGVQFSPERFMIDMEDTIDIDEVVTRLNITGKDGIVINSVNPTGQSYLDDFSYFLYPFKRDKNRNVITHSDYMDDDLCHAILDYNELVNKEGSSFHLLLNQKRDLETQKTTQENKLFTLENIELQQILDKITVAKKAGDDTKDLIKQRDAKLLEVTAKKAEISRINSQITNISQEIEKLKDRLSMDKFLGEELKKQLSYFIFEDDWTNDNIFDETELYEKGLEELSNRNAPPVDIRTNIVNLFNVNSEKAFWDRIYLGDIIRVVNKNFRTDVKATLSGMTFDFDQQSIQVTLSNGKRARSLEQEFANTLYTTKKASTEYNKKKIDYDTLLVNYNARNDRISSPVANPTILNNGTAITHVVNDNGSVDISIEWQFPNSKEDKYNIDGFLVHCYSDTSSDTYIFGSKMSSEQYLSVSYDKRIATLTGQVSNKYYTFGIQAYRTVEASIDSSGRILSDIIQPQFPSENPYLPSNSVEVKGSLSGRVNGLYTISTEAKPEDPEKGTIWINPKNNKQELFNGEEWVVSSAGSADSLNGFTASTTTSPNSIPVRNESGIISGSIDGNAEMLGGRAASDYALAENIPIPPKFAKGIYTGDGTLSKQIPLTFTPDLVKITPISPEDSQLVIESQLGGYAYQVTSTGLSLIGGDLGYGALGNNLFVTGSDSNCRGNKLNVKYIWEAYQQN.

Residues 351–381 are a coiled coil; the sequence is AKKAEISRINSQITNISQEIEKLKDRLSMDK. Positions 537–648 constitute a Fibronectin type-III domain; that stretch reads PVANPTILNN…SIDSSGRILS (112 aa).

This chain is SPbeta prophage-derived uncharacterized protein YomG (yomG), found in Bacillus subtilis (strain 168).